The primary structure comprises 417 residues: Phosphoglycerate kinase (417 aa).

(2R)-3-phosphoglycerate-binding residues include V23, D24, F25, N26, Q39, R40, S63, H64, G66, R67, L122, R123, H170, and R171. G214 lines the ADP pocket. G214 serves as a coordination point for CDP. Positions 215 and 216 each coordinate AMP. A215 provides a ligand contact to ATP. A215 is a Mg(2+) binding site. Position 219 (D219) interacts with CDP. D219 provides a ligand contact to Mg(2+). K220 provides a ligand contact to AMP. K220 contacts ATP. G238 provides a ligand contact to ADP. G238 serves as a coordination point for CDP. 2 residues coordinate AMP: G239 and G313. ATP contacts are provided by G239 and G313. Positions 338 and 343 each coordinate CDP. F343 provides a ligand contact to ADP. E344 provides a ligand contact to AMP. Residues E344, D375, and T376 each contribute to the ATP site. Position 375 (D375) interacts with Mg(2+).

The protein belongs to the phosphoglycerate kinase family. Monomer. The cofactor is Mg(2+).

It localises to the cytoplasm. The protein localises to the mitochondrion. It carries out the reaction (2R)-3-phosphoglycerate + ATP = (2R)-3-phospho-glyceroyl phosphate + ADP. It participates in carbohydrate degradation; glycolysis; pyruvate from D-glyceraldehyde 3-phosphate: step 2/5. Catalyzes one of the two ATP producing reactions in the glycolytic pathway via the reversible conversion of 1,3-diphosphoglycerate to 3-phosphoglycerate. Both L- and D- forms of purine and pyrimidine nucleotides can be used as substrates, but the activity is much lower on pyrimidines. Negatively regulates the biosynthesis of acetyl-CoA from pyruvate in the mitochondrion. The chain is Phosphoglycerate kinase (PGKA) from Penicillium citrinum.